Consider the following 482-residue polypeptide: Zinc metalloproteinase/disintegrin (482 aa).

The signal sequence occupies residues 1–20; the sequence is MIQVLLVTICLAAFPYQGSS. The propeptide occupies 21–189; the sequence is MILESGNVND…IKASQLVVTA (169 aa). The Peptidase M12B domain occupies 197–393; the sequence is RYIELVVVAD…HNPQCILNEP (197 aa). E200 and D284 together coordinate Ca(2+). Cystine bridges form between C308–C388 and C348–C372. Residue H333 participates in Zn(2+) binding. E334 is a catalytic residue. Positions 337 and 343 each coordinate Zn(2+). C388 and N391 together coordinate Ca(2+). The propeptide occupies 394–409; that stretch reads LRTDTVSTPVSGNELL. The Disintegrin domain occupies 401–482; the sequence is TPVSGNELLE…AGCPRNPFHA (82 aa). 6 disulfide bridges follow: C415/C430, C417/C425, C424/C447, C438/C444, C443/C468, and C456/C475. The Cell attachment site motif lies at 460-462; the sequence is RGD.

This sequence belongs to the venom metalloproteinase (M12B) family. P-II subfamily. P-IId sub-subfamily. Homodimer; disulfide-linked (disintegrin). The cofactor is Zn(2+). In terms of tissue distribution, expressed by the venom gland.

It is found in the secreted. Its function is as follows. This recombinant protein hydrolyzes fibronectin, but has no effect on type I gelatin and type I to V collagens. Selectively hydrolyzes the Aalpha-chain of fibrinogen (FGA), but has no effect on fibrin. In terms of biological role, inhibits ADP-induced platelet aggregation. Recombinant metalloproteinase-disintegrin Mt-d-I (393-408): hydrolyzes type I gelatin, type III and V collagens, but has no effect on type I, II, IV collagens and fibronectin. Selectively hydrolyzes the Aalpha-chain of fibrinogen, but has no effect on fibrin. May induce hemorrhage in vascular tissue. Strongly inhibits ADP-induced platelet aggregation. When concentrated, Mt-d-I undergoes autoproteolytic processing into metalloproteinase and disintegrin. This Gloydius brevicauda (Korean slamosa snake) protein is Zinc metalloproteinase/disintegrin.